We begin with the raw amino-acid sequence, 99 residues long: Ubiquitin-related modifier 1 homolog (99 aa).

Gly99 bears the 1-thioglycine mark. Gly99 participates in a covalent cross-link: Glycyl lysine isopeptide (Gly-Lys) (interchain with K-? in acceptor proteins).

This sequence belongs to the URM1 family. In terms of assembly, interacts with cer. In terms of processing, C-terminal thiocarboxylation occurs in 2 steps, it is first acyl-adenylated (-COAMP) via the hesA/moeB/thiF part of the MOCS3 homolog, then thiocarboxylated (-COSH) via the rhodanese domain of the MOCS3 homolog.

The protein localises to the cytoplasm. It participates in tRNA modification; 5-methoxycarbonylmethyl-2-thiouridine-tRNA biosynthesis. Functionally, acts as a sulfur carrier required for 2-thiolation of mcm(5)S(2)U at tRNA wobble positions of cytosolic tRNA(Lys), tRNA(Glu) and tRNA(Gln). Serves as sulfur donor in tRNA 2-thiolation reaction by being thiocarboxylated (-COSH) at its C-terminus by MOCS3. The sulfur is then transferred to tRNA to form 2-thiolation of mcm(5)S(2)U. Also acts as a ubiquitin-like protein (UBL) that is covalently conjugated via an isopeptide bond to lysine residues of target proteins such as Prx2/Jafrac1, Ciao1, Eip71CD and GILT1. The thiocarboxylated form serves as substrate for conjugation and oxidative stress specifically induces the formation of UBL-protein conjugates. The sequence is that of Ubiquitin-related modifier 1 homolog from Drosophila persimilis (Fruit fly).